The following is an 87-amino-acid chain: Small ribosomal subunit protein bS20 (87 aa).

Residues 1–22 (MANSAQARKRARQAVKQRAHNA) are disordered. Basic residues predominate over residues 7-19 (ARKRARQAVKQRA).

The protein belongs to the bacterial ribosomal protein bS20 family.

Its function is as follows. Binds directly to 16S ribosomal RNA. The chain is Small ribosomal subunit protein bS20 from Methylobacillus flagellatus (strain ATCC 51484 / DSM 6875 / VKM B-1610 / KT).